Reading from the N-terminus, the 462-residue chain is Cysteine proteinase RD21A (462 aa).

An N-terminal signal peptide occupies residues 1 to 21; it reads MGFLKPTMAILFLAMVAVSSA. The propeptide at 22–136 is activation peptide; that stretch reads VDMSIISYDE…LRYEARVGDE (115 aa). N90 is a glycosylation site (N-linked (GlcNAc...) asparagine). 5 cysteine pairs are disulfide-bonded: C158–C200, C192–C233, C291–C342, C375–C387, and C381–C402. C161 is a catalytic residue. Catalysis depends on residues H297 and N317. The propeptide at 353-462 is removed in mature form; sequence KNGENPPNPG…FWSQGRKNIA (110 aa). Residue N414 is glycosylated (N-linked (GlcNAc...) asparagine).

Belongs to the peptidase C1 family. As to quaternary structure, interacts with SERPIN1. Interacts with PRN2. Interacts with WSCP. Interacts with TZF4, TZF5 and TZF6.

It is found in the vacuole. It localises to the golgi apparatus. The protein resides in the cytoplasm. Its subcellular location is the stress granule. The protein localises to the P-body. Inhibited by the cysteine protease inhibitor E64 (L-trans-epoxysuccinyl-leucylamide-(4-guanido)-butane). Cysteine protease that plays a role in immunity, senescence, and biotic and abiotic stresses. Involved in immunity against the necrotrophic fungal pathogen Botrytis cinerea. Involved in elicitor-stimulated programmed cell death (PCD). During infection by the necrotrophic fungal pathogen Botrytis cinerea, functions as a PCD-promoting protease that is released from the ER body or vacuole to the cytoplasm. Accumulates in endoplasmic reticulum-derived bodies in epidermal cells and may participate in cell death in stressed or injured cells. Involved in water stress-induced cell death through its protease activity that is released to the cytoplasm after vacuolar collapse. Possesses protease activity in vitro and is involved in cell death in the transmitting tract and septum epidermis during flower development. Possesses peptide ligase activity. Can ligate peptides to unmodified N-termini of acceptor proteins. Probably ligates through a thioester intermediate. This chain is Cysteine proteinase RD21A, found in Arabidopsis thaliana (Mouse-ear cress).